The primary structure comprises 638 residues: MILFNRVGYFVSLFATVSCGCMTQLYKNTFFRGGDLAAIYTPDAQYCQKMCTFHPRCLLFSFLAVTPPKETNKRFGCFMKESITGTLPRIHRTGAISGHSLKQCGHQISACHRDIYKGLDMRGSNFNISKTDNIEECQKLCTNNFHCQFFTYATSAFYRPEYRKKCLLKHSASGTPTSIKSADNLVSGFSLKSCALSEIGCPMDIFQHSAFADLNVSQVITPDAFVCRTICTFHPNCLFFTFYTNEWETESQRNVCFLKTSKSGRPSPPIPQENAISGYSLLTCRKTRPEPCHSKIYSGVDFEGEELNVTFVQGADVCQETCTKTIRCQFFIYSLLPQDCKEEGCKCSLRLSTDGSPTRITYGMQGSSGYSLRLCKLVDSPDCTTKINARIVGGTNASLGEWPWQVSLQVKLVSQTHLCGGSIIGRQWVLTAAHCFDGIPYPDVWRIYGGILSLSEITKETPSSRIKELIIHQEYKVSEGNYDIALIKLQTPLNYTEFQKPICLPSKADTNTIYTNCWVTGWGYTKEQGETQNILQKATIPLVPNEECQKKYRDYVINKQMICAGYKEGGTDACKGDSGGPLVCKHSGRWQLVGITSWGEGCARKDQPGVYTKVSEYMDWILEKTQSSDVRALETSSA.

The first 19 residues, 1–19 (MILFNRVGYFVSLFATVSC), serve as a signal peptide directing secretion. 4 Apple domains span residues 21–104 (CMTQ…LKQC), 111–194 (CHRD…LKSC), 201–284 (CPMD…LLTC), and 292–375 (CHSK…LRLC). 18 cysteine pairs are disulfide-bonded: cysteine 21-cysteine 104, cysteine 47-cysteine 77, cysteine 51-cysteine 57, cysteine 111-cysteine 194, cysteine 137-cysteine 166, cysteine 141-cysteine 147, cysteine 201-cysteine 284, cysteine 227-cysteine 256, cysteine 231-cysteine 237, cysteine 292-cysteine 375, cysteine 318-cysteine 347, cysteine 322-cysteine 328, cysteine 340-cysteine 345, cysteine 383-cysteine 503, cysteine 419-cysteine 435, cysteine 517-cysteine 584, cysteine 548-cysteine 563, and cysteine 574-cysteine 602. Asparagine 127 carries N-linked (GlcNAc...) asparagine glycosylation. Residue asparagine 215 is glycosylated (N-linked (GlcNAc...) asparagine). Residue asparagine 308 is glycosylated (N-linked (GlcNAc...) asparagine). Residues 391 to 626 (IVGGTNASLG…YMDWILEKTQ (236 aa)) enclose the Peptidase S1 domain. The N-linked (GlcNAc...) asparagine glycan is linked to asparagine 396. Residues histidine 434 and aspartate 483 each act as charge relay system in the active site. Residue asparagine 494 is glycosylated (N-linked (GlcNAc...) asparagine). The Charge relay system role is filled by serine 578.

The protein belongs to the peptidase S1 family. Plasma kallikrein subfamily. In terms of assembly, forms a heterodimer with SERPINA5. The zymogen is activated by factor XIIa, which cleaves the molecule into a light chain, which contains the active site, and a heavy chain, which associates with HMW kininogen. These chains are linked by one or more disulfide bonds.

Its subcellular location is the secreted. It carries out the reaction Cleaves selectively Arg-|-Xaa and Lys-|-Xaa bonds, including Lys-|-Arg and Arg-|-Ser bonds in (human) kininogen to release bradykinin.. Inhibited by SERPINA5. The enzyme cleaves Lys-Arg and Arg-Ser bonds. It activates, in a reciprocal reaction, factor XII after its binding to a negatively charged surface. It also releases bradykinin from HMW kininogen and may also play a role in the renin-angiotensin system by converting prorenin into renin. The polypeptide is Plasma kallikrein (Klkb1) (Mus musculus (Mouse)).